A 376-amino-acid chain; its full sequence is Tetraacyldisaccharide 4'-kinase (376 aa).

51-58 (AVGGTGKT) serves as a coordination point for ATP.

The protein belongs to the LpxK family.

The catalysed reaction is a lipid A disaccharide + ATP = a lipid IVA + ADP + H(+). Its pathway is glycolipid biosynthesis; lipid IV(A) biosynthesis; lipid IV(A) from (3R)-3-hydroxytetradecanoyl-[acyl-carrier-protein] and UDP-N-acetyl-alpha-D-glucosamine: step 6/6. Functionally, transfers the gamma-phosphate of ATP to the 4'-position of a tetraacyldisaccharide 1-phosphate intermediate (termed DS-1-P) to form tetraacyldisaccharide 1,4'-bis-phosphate (lipid IVA). The protein is Tetraacyldisaccharide 4'-kinase of Bacteroides fragilis (strain ATCC 25285 / DSM 2151 / CCUG 4856 / JCM 11019 / LMG 10263 / NCTC 9343 / Onslow / VPI 2553 / EN-2).